A 377-amino-acid chain; its full sequence is Cyclin-I (377 aa).

A disordered region spans residues 356–377 (TDLSRQEGHASPCPPLQPVSVM). Over residues 367 to 377 (PCPPLQPVSVM) the composition is skewed to pro residues.

It belongs to the cyclin family.

This Mus musculus (Mouse) protein is Cyclin-I (Ccni).